A 1009-amino-acid chain; its full sequence is UvrABC system protein A (1009 aa).

32-39 (GLSGSGKS) provides a ligand contact to ATP. ABC transporter domains are found at residues 314-592 (WSHG…AESQ) and 612-941 (RDPS…KFLR). ATP is bound at residue 645–652 (GVSGSGKS). A C4-type zinc finger spans residues 744–770 (CENCSGDGTIKIEMNFLPDVYVPCEVC). Residues 956–1009 (KAPRKTAARKTAAAKSTTKKTATVRTTNNTATKKAAAVTKKTAPAKKTTRARKA) form a disordered region. Low complexity predominate over residues 964–997 (RKTAAAKSTTKKTATVRTTNNTATKKAAAVTKKT). Positions 998–1009 (APAKKTTRARKA) are enriched in basic residues.

Belongs to the ABC transporter superfamily. UvrA family. Forms a heterotetramer with UvrB during the search for lesions.

The protein localises to the cytoplasm. The UvrABC repair system catalyzes the recognition and processing of DNA lesions. UvrA is an ATPase and a DNA-binding protein. A damage recognition complex composed of 2 UvrA and 2 UvrB subunits scans DNA for abnormalities. When the presence of a lesion has been verified by UvrB, the UvrA molecules dissociate. This is UvrABC system protein A from Streptomyces avermitilis (strain ATCC 31267 / DSM 46492 / JCM 5070 / NBRC 14893 / NCIMB 12804 / NRRL 8165 / MA-4680).